The chain runs to 642 residues: Serotransferrin (642 aa).

2 consecutive Transferrin-like domains span residues 1-280 (GIKE…SLKK) and 290-621 (IKWC…SLRQ). 2 residues coordinate Fe(3+): Asp-25 and Tyr-54. 3 disulfides stabilise this stretch: Cys-77-Cys-158, Cys-121-Cys-137, and Cys-186-Cys-200. The hydrogencarbonate site is built by Thr-79, Lys-83, Ala-85, and Gly-86. Fe(3+) is bound at residue Tyr-152. Position 208 (His-208) interacts with Fe(3+). 2 disulfides stabilise this stretch: Cys-293-Cys-329 and Cys-303-Cys-320. Asp-344 provides a ligand contact to Fe(3+). Disulfide bonds link Cys-354-Cys-633, Cys-369-Cys-594, Cys-402-Cys-480, Cys-426-Cys-622, Cys-436-Cys-450, Cys-447-Cys-463, and Cys-520-Cys-535. Residue Asn-365 is glycosylated (N-linked (GlcNAc...) asparagine). Fe(3+) is bound at residue Tyr-379. Thr-404, Arg-408, Ala-410, and Gly-411 together coordinate hydrogencarbonate. Residue Tyr-474 coordinates Fe(3+). A Fe(3+)-binding site is contributed by His-543.

The protein belongs to the transferrin family. Monomer. Brain and liver; to a lesser extent in kidney and heart.

The protein resides in the secreted. In terms of biological role, transferrins are iron binding transport proteins which can bind two Fe(3+) ions in association with the binding of an anion, usually bicarbonate. This chain is Serotransferrin (tf), found in Gadus morhua (Atlantic cod).